The primary structure comprises 611 residues: Solute carrier family 23 member 3 (611 aa).

At 1–52 (MSRSPLHPIPLLSEGYQDTPAPLPPLLPPLQNPSSRSWASRVFGPSTWGLSC) the chain is on the cytoplasmic side. Residues 53–73 (LLALQHFLVLASLLWASHLLL) traverse the membrane as a helical segment. Residues 74–88 (LHGLPPGGLSYPPAQ) are Extracellular-facing. A helical membrane pass occupies residues 89–109 (LLASSFFSCGLSTVLQTWMGS). The Cytoplasmic segment spans residues 110 to 168 (RLPLIQAPSLEFLIPALVLTNQKLPLTTKTPGNASLSLPLCSLTRSCHGLELWNTSLRE). The helical transmembrane segment at 169-189 (VSGAVVVSGLLQGTIGLLGVP) threads the bilayer. The Extracellular portion of the chain corresponds to 190-191 (GR). Residues 192 to 212 (VFPYCGPLVLAPSLVVAGLSA) form a helical membrane-spanning segment. The Cytoplasmic segment spans residues 213–215 (HKE). The chain crosses the membrane as a helical span at residues 216–236 (VAQFCSAHWGLALLLILLMVV). At 237 to 269 (CSQHLGSCQIPLCSWRPSSTSTHICIPVFRLLS) the chain is on the extracellular side. A helical transmembrane segment spans residues 270 to 290 (VLAPVACVWFISAFVGTSVIP). The Cytoplasmic segment spans residues 291 to 319 (LQLSEPSDAPWFWLPHPGEWEWPLLTPRA). The chain crosses the membrane as a helical span at residues 320 to 340 (LAAGISMALAASTSSLGCYAL). At 341–358 (CGQLLRLSPPPPHACSRG) the chain is on the extracellular side. A helical membrane pass occupies residues 359–379 (LSLEGLGSVLAGLLGSPLGTA). Over 380–397 (SSFPNVGTVSLFQTGSRR) the chain is Cytoplasmic. A helical transmembrane segment spans residues 398-417 (VAHLVGLFCMGLGLSPRLAQ). The Extracellular segment spans residues 418–426 (LFTSIPLPV). A helical membrane pass occupies residues 427 to 449 (LGGVLGVTQAVVLSAGFSSFHLA). Residues 450-455 (DIDSGR) lie on the Cytoplasmic side of the membrane. A helical transmembrane segment spans residues 456 to 475 (NVFIVGFSIFMALLLPRWLR). Over 476 to 489 (EAPVLLNTGWSPLD) the chain is Extracellular. Residues 490–510 (MFLRSLLAEPIFLAGLLGFLL) traverse the membrane as a helical segment. Over 511-611 (ENTISGTRAE…TASREGVRSQ (101 aa)) the chain is Cytoplasmic. The disordered stretch occupies residues 574-611 (PEDSGDEGGSSKTGERADLLPNSGESYSTASREGVRSQ). Over residues 596-605 (SGESYSTASR) the composition is skewed to polar residues.

The protein belongs to the nucleobase:cation symporter-2 (NCS2) (TC 2.A.40) family.

It localises to the membrane. Its subcellular location is the cytoplasm. It catalyses the reaction hypoxanthine(out) + Na(+)(out) = hypoxanthine(in) + Na(+)(in). Its function is as follows. Acts as a sodium-dependent hypoxanthine transporter. May show xanthine-hypoxanthine exchange activity. In Mus musculus (Mouse), this protein is Solute carrier family 23 member 3 (Slc23a3).